The following is a 73-amino-acid chain: uncharacterized protein (73 aa).

The protein belongs to the asfivirus I73R family.

It localises to the virion. This is an uncharacterized protein from Ornithodoros (relapsing fever ticks).